A 56-amino-acid polypeptide reads, in one-letter code: Large ribosomal subunit protein bL32 (56 aa).

The interval 1 to 37 is disordered; it reads MAVQQNKKSRSRRDMRRSHDALTTAAVSVDKASGETH. Residues 7–16 are compositionally biased toward basic residues; it reads KKSRSRRDMR.

It belongs to the bacterial ribosomal protein bL32 family.

This Haemophilus influenzae (strain PittEE) protein is Large ribosomal subunit protein bL32.